A 308-amino-acid polypeptide reads, in one-letter code: Regulating synaptic membrane exocytosis protein 3 (308 aa).

The segment at 86–120 (STETGIAVEMRSRVTRQGSRESTDGSTNSNSSDGT) is disordered. A compositionally biased stretch (low complexity) spans 109-120 (DGSTNSNSSDGT). One can recognise a C2 domain in the interval 156 to 274 (PMGDVHIAIM…DLSAAVTGWY (119 aa)). 2 positions are modified to phosphoserine: Ser-295 and Ser-298.

As to quaternary structure, binds PPFIA3. Does not bind RAB3.

The protein localises to the synapse. Functionally, regulates synaptic membrane exocytosis. The chain is Regulating synaptic membrane exocytosis protein 3 (RIMS3) from Homo sapiens (Human).